The following is a 519-amino-acid chain: Probable carboxypeptidase S-like 2 (519 aa).

Residues phenylalanine 25–leucine 45 traverse the membrane as a helical segment. Histidine 151 serves as a coordination point for Zn(2+). The active site involves aspartate 153. Aspartate 184 is a binding site for Zn(2+). Residue glutamate 218 is the Proton acceptor of the active site. Positions 219, 246, and 490 each coordinate Zn(2+).

It belongs to the peptidase M20A family. Zn(2+) is required as a cofactor.

It localises to the membrane. In Dictyostelium discoideum (Social amoeba), this protein is Probable carboxypeptidase S-like 2.